We begin with the raw amino-acid sequence, 377 residues long: DNA-directed RNA polymerase subunit alpha (377 aa).

The interval 1–259 (MSDSSHNLLY…KHFSVFEKMD (259 aa)) is alpha N-terminal domain (alpha-NTD). Residues 276-377 (KDDILHKLVL…KIRLSKNTKG (102 aa)) form an alpha C-terminal domain (alpha-CTD) region.

This sequence belongs to the RNA polymerase alpha chain family. In terms of assembly, homodimer. The RNAP catalytic core consists of 2 alpha, 1 beta, 1 beta' and 1 omega subunit. When a sigma factor is associated with the core the holoenzyme is formed, which can initiate transcription.

It catalyses the reaction RNA(n) + a ribonucleoside 5'-triphosphate = RNA(n+1) + diphosphate. In terms of biological role, DNA-dependent RNA polymerase catalyzes the transcription of DNA into RNA using the four ribonucleoside triphosphates as substrates. The polypeptide is DNA-directed RNA polymerase subunit alpha (Chlamydia trachomatis serovar A (strain ATCC VR-571B / DSM 19440 / HAR-13)).